The chain runs to 319 residues: Putative metal ion transporter YfjQ (319 aa).

2 consecutive transmembrane segments (helical) span residues 254 to 274 (IMMTLTIVSTIFIPLTFIAGV) and 290 to 310 (GYFAVLGLMAALVIGMLIWFV).

This sequence belongs to the CorA metal ion transporter (MIT) (TC 1.A.35) family.

The protein localises to the cell membrane. The polypeptide is Putative metal ion transporter YfjQ (yfjQ) (Bacillus subtilis (strain 168)).